We begin with the raw amino-acid sequence, 322 residues long: Thymidylate synthase (322 aa).

Residues arginine 25 and 184–185 (RR) each bind dUMP. Cysteine 204 serves as the catalytic Nucleophile. DUMP-binding positions include 224–227 (RSGD), asparagine 235, and 265–267 (HIY). Aspartate 227 provides a ligand contact to (6R)-5,10-methylene-5,6,7,8-tetrahydrofolate. Residue alanine 321 coordinates (6R)-5,10-methylene-5,6,7,8-tetrahydrofolate.

Belongs to the thymidylate synthase family. Bacterial-type ThyA subfamily. As to quaternary structure, homodimer.

The protein localises to the cytoplasm. The enzyme catalyses dUMP + (6R)-5,10-methylene-5,6,7,8-tetrahydrofolate = 7,8-dihydrofolate + dTMP. Its pathway is pyrimidine metabolism; dTTP biosynthesis. Catalyzes the reductive methylation of 2'-deoxyuridine-5'-monophosphate (dUMP) to 2'-deoxythymidine-5'-monophosphate (dTMP) while utilizing 5,10-methylenetetrahydrofolate (mTHF) as the methyl donor and reductant in the reaction, yielding dihydrofolate (DHF) as a by-product. This enzymatic reaction provides an intracellular de novo source of dTMP, an essential precursor for DNA biosynthesis. The sequence is that of Thymidylate synthase from Leuconostoc mesenteroides subsp. mesenteroides (strain ATCC 8293 / DSM 20343 / BCRC 11652 / CCM 1803 / JCM 6124 / NCDO 523 / NBRC 100496 / NCIMB 8023 / NCTC 12954 / NRRL B-1118 / 37Y).